Reading from the N-terminus, the 307-residue chain is Zinc transporter ZIP9 (307 aa).

Residues 4–24 form a helical membrane-spanning segment; it reads FISISLLSLAMLVGCYVAGII. The N-linked (GlcNAc...) asparagine glycan is linked to N29. Helical transmembrane passes span 35-55, 106-126, 146-166, 176-196, and 210-230; these read LKLVTVLGAGLLCGTALAVIV, AYIGVSLVLGFVFMLLVDQIG, ITTTLGLVVHAAADGVALGAA, LIVFVAIMLHKAPAAFGLVSF, and HLLVFALAAPVMSMVTYLGLS. N241 carries an N-linked (GlcNAc...) asparagine glycan. Helical transmembrane passes span 244-264 and 286-306; these read GVAMLFSAGTFLYVATVHVLP and LEVAALVLGCLIPLILSVGHQ.

Belongs to the ZIP transporter (TC 2.A.5) family. Highly expressed in pancreas, testis, and pituitary and moderately in the kidney, liver, uterus, heart, prostate, and brain, whereas expression is lower in the ovary and colon.

It localises to the golgi apparatus. Its subcellular location is the trans-Golgi network membrane. The protein localises to the cell membrane. It is found in the cytoplasm. The protein resides in the perinuclear region. It localises to the mitochondrion. Its subcellular location is the nucleus. It catalyses the reaction Zn(2+)(in) = Zn(2+)(out). In terms of biological role, transports zinc ions across cell and organelle membranes into the cytoplasm and regulates intracellular zinc homeostasis. Participates in the zinc ions efflux out of the secretory compartments. Regulates intracellular zinc level, resulting in the enhancement of AKT1 and MAPK3/MAPK1 (Erk1/2) phosphorylation in response to the BCR activation. Also functions as a membrane androgen receptor that mediates, through a G protein, the non-classical androgen signaling pathway, characterized by the activation of MAPK3/MAPK1 (Erk1/2) and transcription factors CREB1 or ATF1. This pathway contributes to CLDN1 and CLDN5 expression and tight junction formation between adjacent Sertoli cells. Mediates androgen-induced vascular endothelial cell proliferation through activation of an inhibitory G protein leading to the AKT1 and MAPK3/MAPK1 (Erk1/2) activation which in turn modulate inhibition (phosphorylation) of GSK3B and CCND1 transcription. Moreover, has dual functions as a membrane-bound androgen receptor and as an androgen-dependent zinc transporter both of which are mediated through an inhibitory G protein (Gi) that mediates both MAP kinase and zinc signaling leading to the androgen-dependent apoptotic process. The polypeptide is Zinc transporter ZIP9 (Homo sapiens (Human)).